The chain runs to 167 residues: Phosphopantetheine adenylyltransferase (167 aa).

Ser-10 contacts substrate. ATP is bound by residues 10 to 11 (SF) and His-18. Substrate contacts are provided by Lys-42, Ala-79, and Arg-93. ATP is bound by residues 94-96 (GLR), Glu-104, and 129-135 (VGHITAT).

The protein belongs to the bacterial CoaD family. In terms of assembly, homohexamer. Mg(2+) is required as a cofactor.

The protein localises to the cytoplasm. The enzyme catalyses (R)-4'-phosphopantetheine + ATP + H(+) = 3'-dephospho-CoA + diphosphate. It participates in cofactor biosynthesis; coenzyme A biosynthesis; CoA from (R)-pantothenate: step 4/5. Its function is as follows. Reversibly transfers an adenylyl group from ATP to 4'-phosphopantetheine, yielding dephospho-CoA (dPCoA) and pyrophosphate. The protein is Phosphopantetheine adenylyltransferase of Methylocella silvestris (strain DSM 15510 / CIP 108128 / LMG 27833 / NCIMB 13906 / BL2).